We begin with the raw amino-acid sequence, 463 residues long: Bifunctional protein HldE (463 aa).

The interval M1–I315 is ribokinase. N191–E194 lines the ATP pocket. D260 is a catalytic residue. The cytidylyltransferase stretch occupies residues F334–D463.

This sequence in the N-terminal section; belongs to the carbohydrate kinase PfkB family. The protein in the C-terminal section; belongs to the cytidylyltransferase family. Homodimer.

It catalyses the reaction D-glycero-beta-D-manno-heptose 7-phosphate + ATP = D-glycero-beta-D-manno-heptose 1,7-bisphosphate + ADP + H(+). It carries out the reaction D-glycero-beta-D-manno-heptose 1-phosphate + ATP + H(+) = ADP-D-glycero-beta-D-manno-heptose + diphosphate. It functions in the pathway nucleotide-sugar biosynthesis; ADP-L-glycero-beta-D-manno-heptose biosynthesis; ADP-L-glycero-beta-D-manno-heptose from D-glycero-beta-D-manno-heptose 7-phosphate: step 1/4. The protein operates within nucleotide-sugar biosynthesis; ADP-L-glycero-beta-D-manno-heptose biosynthesis; ADP-L-glycero-beta-D-manno-heptose from D-glycero-beta-D-manno-heptose 7-phosphate: step 3/4. Its function is as follows. Catalyzes the phosphorylation of D-glycero-D-manno-heptose 7-phosphate at the C-1 position to selectively form D-glycero-beta-D-manno-heptose-1,7-bisphosphate. Catalyzes the ADP transfer from ATP to D-glycero-beta-D-manno-heptose 1-phosphate, yielding ADP-D-glycero-beta-D-manno-heptose. The sequence is that of Bifunctional protein HldE from Helicobacter acinonychis (strain Sheeba).